The following is a 256-amino-acid chain: Ubiquinone/menaquinone biosynthesis C-methyltransferase UbiE (256 aa).

S-adenosyl-L-methionine contacts are provided by residues Thr-79, Asp-100, and 128–129 (DA).

This sequence belongs to the class I-like SAM-binding methyltransferase superfamily. MenG/UbiE family.

The catalysed reaction is a 2-demethylmenaquinol + S-adenosyl-L-methionine = a menaquinol + S-adenosyl-L-homocysteine + H(+). It carries out the reaction a 2-methoxy-6-(all-trans-polyprenyl)benzene-1,4-diol + S-adenosyl-L-methionine = a 5-methoxy-2-methyl-3-(all-trans-polyprenyl)benzene-1,4-diol + S-adenosyl-L-homocysteine + H(+). The protein operates within quinol/quinone metabolism; menaquinone biosynthesis; menaquinol from 1,4-dihydroxy-2-naphthoate: step 2/2. It functions in the pathway cofactor biosynthesis; ubiquinone biosynthesis. In terms of biological role, methyltransferase required for the conversion of demethylmenaquinol (DMKH2) to menaquinol (MKH2) and the conversion of 2-polyprenyl-6-methoxy-1,4-benzoquinol (DDMQH2) to 2-polyprenyl-3-methyl-6-methoxy-1,4-benzoquinol (DMQH2). The polypeptide is Ubiquinone/menaquinone biosynthesis C-methyltransferase UbiE (Stutzerimonas stutzeri (strain A1501) (Pseudomonas stutzeri)).